Reading from the N-terminus, the 225-residue chain is NAD(P)H-quinone oxidoreductase subunit K, chloroplastic (225 aa).

Cys43, Cys44, Cys108, and Cys139 together coordinate [4Fe-4S] cluster.

The protein belongs to the complex I 20 kDa subunit family. In terms of assembly, NDH is composed of at least 16 different subunits, 5 of which are encoded in the nucleus. [4Fe-4S] cluster is required as a cofactor.

The protein resides in the plastid. It is found in the chloroplast thylakoid membrane. The enzyme catalyses a plastoquinone + NADH + (n+1) H(+)(in) = a plastoquinol + NAD(+) + n H(+)(out). The catalysed reaction is a plastoquinone + NADPH + (n+1) H(+)(in) = a plastoquinol + NADP(+) + n H(+)(out). NDH shuttles electrons from NAD(P)H:plastoquinone, via FMN and iron-sulfur (Fe-S) centers, to quinones in the photosynthetic chain and possibly in a chloroplast respiratory chain. The immediate electron acceptor for the enzyme in this species is believed to be plastoquinone. Couples the redox reaction to proton translocation, and thus conserves the redox energy in a proton gradient. This Triticum aestivum (Wheat) protein is NAD(P)H-quinone oxidoreductase subunit K, chloroplastic.